Reading from the N-terminus, the 589-residue chain is ATP-dependent lipid A-core flippase (589 aa).

A run of 5 helical transmembrane segments spans residues 29–49, 68–88, 157–177, 254–274, and 283–303; these read WLLV…STFL, ALWL…AGYI, VIGA…AILL, ISSA…LLIA, and LSPG…PALK. The 283-residue stretch at 32-314 folds into the ABC transmembrane type-1 domain; that stretch reads VVAACGALLE…LTNVQNMLQS (283 aa). The 237-residue stretch at 346–582 folds into the ABC transporter domain; it reads IEFRGITARY…DGLYAYLYSM (237 aa). Residue 380–387 participates in ATP binding; that stretch reads GRSGSGKS.

Belongs to the ABC transporter superfamily. Lipid exporter (TC 3.A.1.106) family. In terms of assembly, homodimer.

It localises to the cell inner membrane. The catalysed reaction is ATP + H2O + lipid A-core oligosaccharideSide 1 = ADP + phosphate + lipid A-core oligosaccharideSide 2.. Its function is as follows. Involved in lipopolysaccharide (LPS) biosynthesis. Translocates lipid A-core from the inner to the outer leaflet of the inner membrane. Transmembrane domains (TMD) form a pore in the inner membrane and the ATP-binding domain (NBD) is responsible for energy generation. This is ATP-dependent lipid A-core flippase from Xylella fastidiosa (strain Temecula1 / ATCC 700964).